A 338-amino-acid chain; its full sequence is DNA-directed RNA polymerase subunit alpha (338 aa).

Positions Met-1–Glu-10 are enriched in polar residues. The tract at residues Met-1 to Lys-24 is disordered. The tract at residues Met-1–Glu-234 is alpha N-terminal domain (alpha-NTD). The tract at residues Phe-250–Tyr-338 is alpha C-terminal domain (alpha-CTD).

It belongs to the RNA polymerase alpha chain family. In terms of assembly, homodimer. The RNAP catalytic core consists of 2 alpha, 1 beta, 1 beta' and 1 omega subunit. When a sigma factor is associated with the core the holoenzyme is formed, which can initiate transcription.

The catalysed reaction is RNA(n) + a ribonucleoside 5'-triphosphate = RNA(n+1) + diphosphate. Its function is as follows. DNA-dependent RNA polymerase catalyzes the transcription of DNA into RNA using the four ribonucleoside triphosphates as substrates. The polypeptide is DNA-directed RNA polymerase subunit alpha (Rhodospirillum centenum (strain ATCC 51521 / SW)).